A 95-amino-acid polypeptide reads, in one-letter code: Putative septation protein SpoVG (95 aa).

It belongs to the SpoVG family.

Its function is as follows. Could be involved in septation. This is Putative septation protein SpoVG from Brevibacillus brevis (strain 47 / JCM 6285 / NBRC 100599).